A 177-amino-acid polypeptide reads, in one-letter code: Large ribosomal subunit protein uL6 (177 aa).

This sequence belongs to the universal ribosomal protein uL6 family. Part of the 50S ribosomal subunit.

Its function is as follows. This protein binds to the 23S rRNA, and is important in its secondary structure. It is located near the subunit interface in the base of the L7/L12 stalk, and near the tRNA binding site of the peptidyltransferase center. This is Large ribosomal subunit protein uL6 from Vibrio atlanticus (strain LGP32) (Vibrio splendidus (strain Mel32)).